The following is a 161-amino-acid chain: NAD(P)H-quinone oxidoreductase subunit I, chloroplastic (161 aa).

4Fe-4S ferredoxin-type domains lie at 55 to 84 (GRIH…VDWK) and 95 to 124 (LNYS…MTEE). Residues cysteine 64, cysteine 67, cysteine 70, cysteine 74, cysteine 104, cysteine 107, cysteine 110, and cysteine 114 each contribute to the [4Fe-4S] cluster site.

It belongs to the complex I 23 kDa subunit family. In terms of assembly, NDH is composed of at least 16 different subunits, 5 of which are encoded in the nucleus. It depends on [4Fe-4S] cluster as a cofactor.

It is found in the plastid. It localises to the chloroplast thylakoid membrane. It carries out the reaction a plastoquinone + NADH + (n+1) H(+)(in) = a plastoquinol + NAD(+) + n H(+)(out). The enzyme catalyses a plastoquinone + NADPH + (n+1) H(+)(in) = a plastoquinol + NADP(+) + n H(+)(out). In terms of biological role, NDH shuttles electrons from NAD(P)H:plastoquinone, via FMN and iron-sulfur (Fe-S) centers, to quinones in the photosynthetic chain and possibly in a chloroplast respiratory chain. The immediate electron acceptor for the enzyme in this species is believed to be plastoquinone. Couples the redox reaction to proton translocation, and thus conserves the redox energy in a proton gradient. In Lotus japonicus (Lotus corniculatus var. japonicus), this protein is NAD(P)H-quinone oxidoreductase subunit I, chloroplastic.